An 825-amino-acid chain; its full sequence is Glycerol-3-phosphate acyltransferase (825 aa).

Residues 304–309 carry the HXXXXD motif motif; it reads CHRSHM. Residues 803-825 form a disordered region; that stretch reads MPAETSNQPEAPETPEPEGKTES.

It belongs to the GPAT/DAPAT family.

It is found in the cell inner membrane. The enzyme catalyses sn-glycerol 3-phosphate + an acyl-CoA = a 1-acyl-sn-glycero-3-phosphate + CoA. The protein operates within phospholipid metabolism; CDP-diacylglycerol biosynthesis; CDP-diacylglycerol from sn-glycerol 3-phosphate: step 1/3. The protein is Glycerol-3-phosphate acyltransferase of Yersinia pseudotuberculosis serotype O:1b (strain IP 31758).